The chain runs to 476 residues: Alkaline phosphatase H (476 aa).

Residues 1–26 form the signal peptide; the sequence is MTPGYPLALSLAVSMAVLGSALPAQA. D77 contributes to the Mg(2+) binding site. A Zn(2+)-binding site is contributed by D77. S128 functions as the Phosphoserine intermediate in the catalytic mechanism. S128 carries the post-translational modification Phosphoserine. D179 and T181 together coordinate Mg(2+). Phosphoserine is present on S206. A Mg(2+)-binding site is contributed by Q346. Residues D353, H357, D395, H396, and H438 each coordinate Zn(2+).

This sequence belongs to the alkaline phosphatase family. Mg(2+) is required as a cofactor. Requires Zn(2+) as cofactor.

It is found in the secreted. The protein localises to the periplasm. It carries out the reaction a phosphate monoester + H2O = an alcohol + phosphate. In terms of biological role, has only phosphomonoesterase activity. In Pseudomonas aeruginosa (strain UCBPP-PA14), this protein is Alkaline phosphatase H (phoA).